Consider the following 1096-residue polypeptide: Serine-repeat antigen protein 3 (1096 aa).

A signal peptide spans 1–21; the sequence is MARLSSIVFIICLLLCNNAIS. Residues 28–205 form a disordered region; that stretch reads PSSGGTLSGG…RSPPPQVNNI (178 aa). A compositionally biased stretch (low complexity) spans 77–97; the sequence is NSDSTGDSSLGSTGSNGSQPA. Asn92 is a glycosylation site (N-linked (GlcNAc...) asparagine). Residues 102–113 show a composition bias toward basic and acidic residues; it reads KEPEPTTPKEPE. Over residues 123–147 the composition is skewed to polar residues; it reads VTPQKTAETASGKQVSPTPSENPPS. Residues 149–161 show a composition bias toward basic and acidic residues; it reads DTPKPESSSEKKV. 8 N-linked (GlcNAc...) asparagine glycosylation sites follow: Asn204, Asn607, Asn637, Asn662, Asn671, Asn712, Asn892, and Asn951. 2 disordered regions span residues 916–952 and 964–1006; these read EAKN…QANS and NQRT…ASAN. 2 stretches are compositionally biased toward polar residues: residues 925 to 952 and 964 to 975; these read QNYG…QANS and NQRTADSNPNAQ. Over residues 976-1006 the composition is skewed to low complexity; that stretch reads STPSPNTTVTDTVNSNTANSNTANSNTASAN. N-linked (GlcNAc...) asparagine glycans are attached at residues Asn981 and Asn1039.

The protein belongs to the peptidase C1 family. Post-translationally, proteolytically cleaved in both blood and liver stage parasites. Precursor of 130 kDa is processed into 72 kDa and 55 kDa forms. Proteolytically cleaved by SUB1.

It localises to the cell membrane. The protein localises to the parasitophorous vacuole. It is found in the secreted. The protein resides in the host cytoplasm. Its function is as follows. Putative cysteine protease. Probably involved in merozoite release from the parasitophorous vacuole during liver stages. This is Serine-repeat antigen protein 3 from Plasmodium berghei (strain Anka).